Here is a 193-residue protein sequence, read N- to C-terminus: Transcriptional regulator RamR (193 aa).

One can recognise an HTH tetR-type domain in the interval Glu7 to Leu66. Positions Ser29–Phe48 form a DNA-binding region, H-T-H motif.

In terms of assembly, homodimer. May bind DNA either as a homodimer or as a pair of homodimers. Various chemicals reduce DNA-binding in vitro, including bile acids, such as cholic and chenodeoxycholic acids, and antimicrobial drugs, such as berberine, crystal violet, dequalinium, ethidium bromide and rhodamine 6G. Binds small regulatory RNA StyR3.

In terms of biological role, transcriptional regulator. Represses the transcription of the transcriptional activator RamA and, thereby, leads to repression of the expression of the efflux pump subunits AcrA and AcrB, and TolC. Acts by binding directly to the promoter region of the ramA gene. Promoter binding may be inhibited partially by the small regulatory RNA StyR3, perhaps thereby ensuring a basal level of expression of RamA. This chain is Transcriptional regulator RamR, found in Salmonella typhimurium (strain LT2 / SGSC1412 / ATCC 700720).